The sequence spans 388 residues: Tumor protein p53-inducible protein 13 (388 aa).

A signal peptide spans 1–27; that stretch reads MVPPPPPPSRLLLVALVGLLSLHEVVA. Residues 28–304 lie on the Extracellular side of the membrane; the sequence is EPAEEAGTRC…ARGPTPRTEE (277 aa). Residues 305-325 form a helical membrane-spanning segment; that stretch reads AAWAAMALTFLLVLLTLATLC. The Cytoplasmic segment spans residues 326–388; it reads TRLHRNFRRS…DSGPDSESSD (63 aa). A compositionally biased stretch (basic residues) spans 361 to 372; it reads PSRRIKRSRRRP. The disordered stretch occupies residues 361 to 388; the sequence is PSRRIKRSRRRPLLPPTPDSGPDSESSD.

The protein resides in the cell membrane. It is found in the cytoplasm. May act as a tumor suppressor. Inhibits tumor cell growth, when overexpressed. The polypeptide is Tumor protein p53-inducible protein 13 (Tp53i13) (Rattus norvegicus (Rat)).